The chain runs to 277 residues: Methyltransferase str3 (277 aa).

Belongs to the methyltransferase superfamily. LaeA methyltransferase family.

Its pathway is mycotoxin biosynthesis. Its function is as follows. Methyltransferase; part of the gene cluster that mediates the biosynthesis of strobilurin A, an antifungal polyketide that contains a key beta-methoxyacrylate toxophore that targets the complex III of the mitochondrial electron transport chain. Strobilurin biosynthesis begins with construction of benzoyl CoA by step-wise elimination of ammonia from phenylalanine by the phenylalanine ammonia-lyase str11, oxygenation by str8 and retro-Claisen reaction to form benzoic acid, which is activated to its CoA thiolester benzoyl CoA by the dedicated CoA ligase str10. Benzoyl CoA forms the starter unit for the highly reducing polyketide synthase stpks1 that produces the polyketide prestrobilutin A. The FAD-dependent oxygenase str9 then catalyzes the key oxidative rearrangement responsible for the creation of the beta-methoxyacrylate toxophore. Str9 performs epoxidation of the 2,3 olefin of prestrobilutin A, followed by Meinwald rearrangement to furnish the aldehyde intermediate. Rapid enolization of the aldehyde intermediate would give the beta-methoxyacrylate skeleton and methylations catalyzed by str2 and str3 complete the synthesis and lead to the production of strobilurin A. The short-chain dehydrogenase stl2 and the dehydrogenase str4 play a role in the shunt pathway leading to the production of bolineol. The cluster encodes no obvious halogenase gene that could be involved in production of strobilurin B, nor any obvious dimethylallyl-transferase that could be involved in the production of strobilurin G. It is possible that unknown proteins encoded in, or near, the cluster (such as str1 or stl1) may form new classes of halogenases or dimethylally-transferases, or that the responsible genes are located elsewhere on the genome. Similarly, proteins encoded by str5/str6 hydrolases appear to have no chemical role in the biosynthesis of strobilurin A. Finally, no obvious self-resistance gene is found within the cluster. The chain is Methyltransferase str3 from Strobilurus tenacellus.